Consider the following 291-residue polypeptide: ATP synthase gamma chain (291 aa).

The protein belongs to the ATPase gamma chain family. As to quaternary structure, F-type ATPases have 2 components, CF(1) - the catalytic core - and CF(0) - the membrane proton channel. CF(1) has five subunits: alpha(3), beta(3), gamma(1), delta(1), epsilon(1). CF(0) has three main subunits: a, b and c.

Its subcellular location is the cell membrane. In terms of biological role, produces ATP from ADP in the presence of a proton gradient across the membrane. The gamma chain is believed to be important in regulating ATPase activity and the flow of protons through the CF(0) complex. The chain is ATP synthase gamma chain from Streptococcus equinus (Streptococcus bovis).